The sequence spans 854 residues: DNA mismatch repair protein MutS (854 aa).

The disordered stretch occupies residues 1-21 (MTASDIQPTEPHTPPTPHADT). 658-665 (GPNASGKS) lines the ATP pocket.

This sequence belongs to the DNA mismatch repair MutS family.

In terms of biological role, this protein is involved in the repair of mismatches in DNA. It is possible that it carries out the mismatch recognition step. This protein has a weak ATPase activity. The protein is DNA mismatch repair protein MutS of Trichormus variabilis (strain ATCC 29413 / PCC 7937) (Anabaena variabilis).